The following is a 252-amino-acid chain: Probable phosphatase SO_1652 (252 aa).

Zn(2+)-binding residues include His-8, His-10, His-16, His-41, Glu-74, His-102, His-132, Asp-193, and His-195.

This sequence belongs to the PHP family. It depends on Zn(2+) as a cofactor.

In Shewanella oneidensis (strain ATCC 700550 / JCM 31522 / CIP 106686 / LMG 19005 / NCIMB 14063 / MR-1), this protein is Probable phosphatase SO_1652.